Reading from the N-terminus, the 430-residue chain is Zinc finger and SCAN domain-containing protein 4 (430 aa).

Residues 1-38 (MASDLRISFQGEPSRNDPGSENLEHKPSQGPAVQEEEE) form a disordered region. Residues 44–126 (RTQLSLLQNS…KFMEDLTDES (83 aa)) form the SCAN box domain. Residues 164-185 (GSPTGTDMETPSWTPQDTSLET) show a composition bias toward polar residues. Disordered stretches follow at residues 164–196 (GSPT…KENG), 224–257 (YPRP…SLKG), and 281–300 (EPVP…GHQE). C2H2-type zinc fingers lie at residues 309–331 (YRCE…QRRH), 337–359 (FTCA…QKIH), 365–387 (FTCS…ERIH), and 393–415 (YECS…LRNH).

The protein resides in the nucleus. It is found in the chromosome. Its subcellular location is the telomere. Embryonic stem (ES) cell-specific transcription factor required to regulate ES cell pluripotency. Binds telomeres and plays a key role in genomic stability in ES cells by regulating telomere elongation. Acts as an activator of spontaneous telomere sister chromatid exchange (T-SCE) and telomere elongation in undifferentiated ES cells. This is Zinc finger and SCAN domain-containing protein 4 (ZSCAN4) from Ailuropoda melanoleuca (Giant panda).